The sequence spans 326 residues: MTMPDLPPDLVEEILSRVPATSVKKLRSTCTQWNAIFKDERFTEKHFSKAPKESMVLMLKEHRVCPDKRLVVWNPCLGETKWIQLKVDYRRYVSKFCLGYIQNNESRRSYKILRSWYSYDDKSSPRQRDLGFEIYEFISDSSWRVLNDGNTYLLAYDVEENSRVVLMFDFTTERFKRLRLPHFQDVGNMDLSVVREEQLSILHWTRNTSKMEIWITNNIDTDATLLWRLHLHTQVFSRNCVRVFSSLYIDKEKKVVLCCNVNDDATSKNIVYIIGEDNGYYTEILFLLPINIHWVLLDRNKKWYSSIFNYVPRLVQIYNGHLLFFS.

Positions Met1–Ala50 constitute an F-box domain.

The protein is Putative F-box protein At3g22710 of Arabidopsis thaliana (Mouse-ear cress).